The chain runs to 70 residues: U-scutigerotoxin(02)-Tl1a (70 aa).

Positions 1–17 are cleaved as a signal peptide; it reads MKYILLGLLLMVVLANA.

It belongs to the scutigerotoxin-02 family. Contains 4 disulfide bonds. As to expression, expressed by the venom gland.

The protein resides in the secreted. In Thereuopoda longicornis (Long-legged centipede), this protein is U-scutigerotoxin(02)-Tl1a.